Reading from the N-terminus, the 89-residue chain is Small ribosomal subunit protein uS15 (89 aa).

This sequence belongs to the universal ribosomal protein uS15 family. Part of the 30S ribosomal subunit. Forms a bridge to the 50S subunit in the 70S ribosome, contacting the 23S rRNA.

One of the primary rRNA binding proteins, it binds directly to 16S rRNA where it helps nucleate assembly of the platform of the 30S subunit by binding and bridging several RNA helices of the 16S rRNA. In terms of biological role, forms an intersubunit bridge (bridge B4) with the 23S rRNA of the 50S subunit in the ribosome. The sequence is that of Small ribosomal subunit protein uS15 from Methylococcus capsulatus (strain ATCC 33009 / NCIMB 11132 / Bath).